The primary structure comprises 204 residues: dTTP/UTP pyrophosphatase (204 aa).

Asp-68 functions as the Proton acceptor in the catalytic mechanism.

It belongs to the Maf family. YhdE subfamily. A divalent metal cation is required as a cofactor.

It localises to the cytoplasm. The catalysed reaction is dTTP + H2O = dTMP + diphosphate + H(+). It carries out the reaction UTP + H2O = UMP + diphosphate + H(+). In terms of biological role, nucleoside triphosphate pyrophosphatase that hydrolyzes dTTP and UTP. May have a dual role in cell division arrest and in preventing the incorporation of modified nucleotides into cellular nucleic acids. This chain is dTTP/UTP pyrophosphatase, found in Thermotoga petrophila (strain ATCC BAA-488 / DSM 13995 / JCM 10881 / RKU-1).